Reading from the N-terminus, the 704-residue chain is Translational regulator orb2 (704 aa).

The disordered stretch occupies residues 1-64 (MDSLKLPKAN…PPGLGSSTPI (64 aa)). A gln/His-rich region spans residues 1–87 (MDSLKLPKAN…ILQSFHHSKH (87 aa)). Residues 9-42 (ANSATSSASGSNSNLSGSTSASASAATSPTSSGT) show a composition bias toward low complexity. Phosphoserine occurs at positions 74, 88, and 100. 3 disordered regions span residues 82-106 (FHHS…SNLL), 166-266 (LPNL…GVSP), and 417-438 (SPSR…GGNV). The tract at residues 163 to 240 (CGGLPNLNLN…PSSPGGGGGG (78 aa)) is gln/His-rich. Low complexity-rich tracts occupy residues 176 to 205 (QLHQ…QQQL), 218 to 233 (QQQQ…SPSS), and 417 to 429 (SPSR…PHSP). Phosphoserine occurs at positions 425 and 428. 2 consecutive RRM domains span residues 447-538 (RKVF…PWRL) and 555-637 (KTVF…PYVL).

Monomer. Upon neuronal stimulation, forms stable amyloid-like oligomers composed of isoform A and isoform B which are required for formation of persistent long-term memory. Isoform A is critical for oligomer formation. Phe-5 of isoform A is required for amyloid-like oligomerization. Rapidly forms amyloids and toxic intermediates are extremely transient. Unlike in the adult nervous system, remains monomeric in the early embryo. Interacts with the translational regulator bol. Interacts with Tob; the interaction is enhanced by neuronal stimulation, stabilizes isoform A and induces oligomerization. Phosphorylation regulates interaction with Tob and oligomerization. Protein phosphatase 2A keeps both Orb2 and Tob in an unphosphorylated form. Following synaptic activation, unphosphorylated Orb2 is bound and stabilized by unphosphorylated Tob. Tob recruits activated LimK which phosphorylates both Orb2 and Tob and enhances Orb2 oligomerization. As to expression, broadly expressed throughout the nervous system of embryo, larva and adult including the ventral nerve cord and brain (at protein level). In early embryos, deposited maternally and distributed uniformly throughout the embryo until the extended germband stage. By mid-embryogenesis, highest levels are found in the central and peripheral nervous systems with lower expression also detected in the ectoderm and mesoderm. In adults, high levels are present in the head and body of both sexes with higher expression in testis than ovary. In the ovary, expressed in both germ and follicle cells. In adult head, predominantly neuronal with broad expression throughout the brain and ventral ganglia including the mushroom body.

The protein resides in the perikaryon. It is found in the cell projection. The protein localises to the axon. Its subcellular location is the dendrite. It localises to the synapse. The protein resides in the cytoplasm. It is found in the perinuclear region. In terms of biological role, RNA-binding protein involved in translational regulation and required for long-term memory. Required in mushroom body gamma neurons for long-term memory in male courtship. Binds to mRNA 3'-UTRs. In its monomeric form, acts as a translational repressor of genes involved in neuronal growth, synapse formation and protein turnover. In its amyloid-like oligomeric form, acts as a translational activator. The monomeric form reduces poly(A) tail length and destabilizes mRNA while the oligomeric form protects and elongates the poly(A) tail and stabilizes mRNA. Involved in asymmetric cell division in the central nervous system. Plays a role in synapse formation and morphology at neuromuscular junctions by modulating the translation of the tumor suppressor brat. Required for the progression of spermatogenesis through meiosis and for sperm differentiation. During sperm differentiation, required to asymmetrically localize and activate the translation of protein kinase aPKC mRNAs which is necessary for spermatid cyst polarization. Also required during spermatid cyst polarization for localization and translation of its own mRNA. Functionally, required for initial memory acquisition. Following subsequent late dopaminergic pathway activation, recruits isoform B into a complex to activate translation of CaMKII which is required for long-term memory consolidation. The polypeptide is Translational regulator orb2 (Drosophila melanogaster (Fruit fly)).